A 618-amino-acid chain; its full sequence is Rho guanine nucleotide exchange factor 25 (618 aa).

Disordered regions lie at residues cysteine 26–glutamate 63 and glycine 169–lysine 193. Residues arginine 199 to methionine 375 enclose the DH domain. The interval leucine 317–glutamine 338 is important for binding to Rho GTPases. The PH domain maps to lysine 387–glutamate 505. The sufficient to bind activated GNAQ stretch occupies residues serine 506–arginine 532. Disordered stretches follow at residues glutamine 521–threonine 556 and alanine 584–proline 604. Residues alanine 584–histidine 593 are compositionally biased toward polar residues.

As to quaternary structure, interacts with activated GNAQ and GNA11. Interacts (via the DH domain) with POPDC1 (via the C-terminus cytoplasmic tail). Interacts with RHOA, CDC42 and RAC1. As to expression, highly expressed in excitable tissues, such as brain, heart and muscle. Elevated expression in hippocampus and cerebellum.

Its subcellular location is the cytoplasm. The protein localises to the myofibril. The protein resides in the sarcomere. It localises to the cell membrane. May play a role in actin cytoskeleton reorganization in different tissues since its activation induces formation of actin stress fibers. It works as a guanine nucleotide exchange factor for Rho family of small GTPases. Links specifically G alpha q/11-coupled receptors to RHOA activation. May be an important regulator of processes involved in axon and dendrite formation. In neurons seems to be an exchange factor primarily for RAC1. Involved in skeletal myogenesis. The chain is Rho guanine nucleotide exchange factor 25 (Arhgef25) from Mus musculus (Mouse).